The primary structure comprises 123 residues: Protein Wnt-7b (123 aa).

Serine 1 carries the O-palmitoleoyl serine; by PORCN lipid modification. Positions 33–61 (VEVVRASRLRQPTFLKIKQIRSYQKPMET) are disordered linker. Cysteine 89 and cysteine 104 form a disulfide bridge. N-linked (GlcNAc...) asparagine glycosylation occurs at asparagine 90.

Belongs to the Wnt family. Post-translationally, palmitoleoylation is required for efficient binding to frizzled receptors. Depalmitoleoylation leads to Wnt signaling pathway inhibition.

Its subcellular location is the secreted. It is found in the extracellular space. The protein localises to the extracellular matrix. Its function is as follows. Ligand for members of the frizzled family of seven transmembrane receptors that functions in the canonical Wnt/beta-catenin signaling pathway. Required for normal fusion of the chorion and the allantois during placenta development. Required for central nervous system (CNS) angiogenesis and blood-brain barrier regulation. The sequence is that of Protein Wnt-7b (WNT-7B) from Sceloporus occidentalis (Western fence lizard).